Reading from the N-terminus, the 737-residue chain is MISVTDIRRAFLDNECHTITKAFGYLHEDKAIALIKIGFHPTYLPKVLYNNVVEFVPEKLYLFKPRTVAPLDLISTITKLKNVDKFASHINYHKNSILITGDKSLIVKCMPYMIISDDDIRFIREQFVGTNSIEYILSFINKESIYRMSYQFSENEIVTIINRDHFMYEPIYEHQVLDSDFLKTMLDRYGIVPINSGIIDELCPEAIIEILMAVVRPRDAIRFLDIVNKNQLTEDSVKNYIINDIRRGKIDYYIPYVEDFLEDRTEDLGIYANIFFEDAIDITKLDITKTELEHISKYMNYYTTYIDHIVNIILQNNYIDILASIIDYVQDVLTEELCIRIVCESTNPVPVTSLPIHSTLVMVMCIQMKYVDIVEFLDEIDIDTLIEKGADPITEYTFTTRWYNKHNDLITLYIKKYGFCPMMMKRLMFEYPLTKEASDHLLKTMDENRGAIMFFPRTICTLPYLLCCNYKLIQKPIPFKEENRNIVYKKNNRVLCFDSLENSAFKSLIKIDSIPGLKTYNMKDITYEKSNNIICVRFIPQESIHNEERRIKLQLFDIARLASYGLYYIPSRYLSSWTPVVNMIEGREYTNPQKIECLVILDLFSEEFIEYQNLGNAVSNKYELEYTISNYQAAINCLMSTLLIYLVLGSIRSISRTENFVLSILNIFYKGLKINELLSEPVSGVCIELNKIKDRASSGDSSFIFLKKNELSKTLSLCEKVCVETILDNNQSFKSSK.

The residue at position 1 (Met-1) is an N-acetylmethionine; by host. Cys-496 and Cys-535 are oxidised to a cystine.

This sequence belongs to the orthopoxvirus OPG064 family. Interacts with host KLC2; this interaction promotes IEV trafficking by engaging the host kinesin-1 complex. Interacts with protein OPG056/F12. N-acetylated on initiator methionine by host.

In terms of biological role, plays a role in intracellular enveloped virus (IEV) transport to the cell surface on microtubules. Together with protein OPG056/F12, forms a complex that interacts with host KLC2 (kinesin light chain isoform 2) to engage the kinesin-1 complex and thereby promote IEV trafficking. The protein is Protein OPG064 (OPG064) of Bos taurus (Bovine).